The primary structure comprises 525 residues: MEAPTLSELEGLRYSELQKLAKTVGLKANLKADKLLKDLKVHFYPESKDESPDYDGGSSLTDTDELNSSQEKDEPVSVSFVTHRRGRGRKPLKNHDTPKDEFLSVSVGAGTESLASETDNTQHQNCLESKKKEVSPPTIDNKHRKRSRSEDTSKQNNLETTEKRQKKASDITSAPSAGKIPRYVGRLSKPESKPSTPNFKKLHEAHFKKMESIDKYMERKQKRLDTVSSSIQEMKMLTKKSNLLKLVEKTPVSDIKKPVKSRLSLLSSLPPTTGASPSRTPTNQRRSGRFSAANKSILFDRSGFKPSVLSSSKMNVRFSEATKDNEHKRSLIKTPARKSSSFLAITPESEPRQMLPNVKKTPARKSLSVLAVTPESEPKQMLPSVKKNEPMTTPEKAKKTDLNTTIQPSTVILESTCPQNKEIAITPFKFTAQTTETPNTNKKGKFNLQASLSRPLGYQPHKGKLKPWGGSEENKCGSNNNVSVLKNNFKQPHLQTREDRRKQHEQDRKGKRDQTLGTRRGVPVQ.

Disordered regions lie at residues 43–203 (FYPE…KKLH), 250–293 (TPVS…FSAA), 373–398 (TPES…EKAK), and 452–525 (LSRP…VPVQ). Residues 58 to 69 (SSLTDTDELNSS) are compositionally biased toward polar residues. Basic residues predominate over residues 82 to 92 (THRRGRGRKPL). Basic and acidic residues predominate over residues 93–102 (KNHDTPKDEF). Residues 113 to 127 (SLASETDNTQHQNCL) are compositionally biased toward polar residues. The segment covering 160 to 169 (TTEKRQKKAS) has biased composition (basic and acidic residues). The span at 270–285 (PPTTGASPSRTPTNQR) shows a compositional bias: polar residues. Polar residues predominate over residues 476–494 (CGSNNNVSVLKNNFKQPHL). The span at 495-514 (QTREDRRKQHEQDRKGKRDQ) shows a compositional bias: basic and acidic residues.

It belongs to the NUSAP family. In terms of assembly, interacts with DNA, microtubules, ipo7, kpna2 and kpnb1. Microtubule stabilization is inhibited by ipo7 and kpna2, while microtubule bundling is inhibited by kpnb1. Active GTP-bound ran causes dissociation of ipo7 and kpnb1.

The protein localises to the cytoplasm. The protein resides in the nucleus. It is found in the cytoskeleton. It localises to the spindle. Microtubule-associated protein with the capacity to bundle and stabilize microtubules. May associate with chromosomes and promote the organization of meiotic or mitotic spindle microtubules around them. In Xenopus laevis (African clawed frog), this protein is Nucleolar and spindle-associated protein 1-C (nusap1-c).